Reading from the N-terminus, the 97-residue chain is UPF0125 protein plu3376 (97 aa).

This sequence belongs to the UPF0125 (RnfH) family.

The chain is UPF0125 protein plu3376 from Photorhabdus laumondii subsp. laumondii (strain DSM 15139 / CIP 105565 / TT01) (Photorhabdus luminescens subsp. laumondii).